A 101-amino-acid polypeptide reads, in one-letter code: MSVSAAVDQYTVLTGDRSKIKDLLCSRLTECGWRDEVRLMCRNILLEKGTNNSFTVEQLITEVTPKARTLVPDAIKKELLMKIRTILTENEEEADEPEDES.

It belongs to the ENY2 family. In terms of assembly, component of the nuclear pore complex (NPC)-associated AMEX complex (anchoring and mRNA export complex), composed of at least e(y)2 and xmas-2. Component of the SAGA transcription coactivator-HAT complexes, at least composed of Ada2b, e(y)2, Pcaf/Gcn5, Taf10 and Nipped-A/Trrap. Within the SAGA complex, e(y)2, Sgf11, and not/nonstop form an additional subcomplex of SAGA called the DUB module (deubiquitination module). Component of the THO complex, composed of at least e(y)2, HPR1, THO2, THOC5, THOC6 and THOC7. Interacts with e(y)1. Interacts with su(Hw) (via zinc fingers). Interacts with xmas-2; required for localization to the nuclear periphery. Interacts with the nuclear pore complex (NPC).

It localises to the nucleus. The protein localises to the nucleoplasm. It is found in the cytoplasm. Involved in mRNA export coupled transcription activation by association with both the AMEX and the SAGA complexes. The SAGA complex is a multiprotein complex that activates transcription by remodeling chromatin and mediating histone acetylation and deubiquitination. Within the SAGA complex, participates in a subcomplex that specifically deubiquitinates histone H2B. The SAGA complex is recruited to specific gene promoters by activators, where it is required for transcription. Required for nuclear receptor-mediated transactivation. Involved in transcription elongation by recruiting the THO complex onto nascent mRNA. The AMEX complex functions in docking export-competent ribonucleoprotein particles (mRNPs) to the nuclear entrance of the nuclear pore complex (nuclear basket). AMEX participates in mRNA export and accurate chromatin positioning in the nucleus by tethering genes to the nuclear periphery. This is Enhancer of yellow 2 transcription factor from Drosophila erecta (Fruit fly).